A 412-amino-acid chain; its full sequence is Squamosa promoter-binding-like protein 2 (412 aa).

The segment at 1–81 (MDWDAKMPSW…AAAAGKRARA (81 aa)) is disordered. A compositionally biased stretch (gly residues) spans 18-31 (PSGGGGGGGGGGGA). 2 stretches are compositionally biased toward low complexity: residues 48–57 (VSAASAAPAA) and 67–81 (SSSS…RARA). An SBP-type zinc finger spans residues 89–167 (VPACSVEGCA…DGHNKRRRKP (79 aa)). Residues C92, C97, C115, H118, C134, C137, H141, and C153 each coordinate Zn(2+). A Bipartite nuclear localization signal motif is present at residues 150-166 (KRSCRKRLDGHNKRRRK).

In terms of tissue distribution, expressed in stems, leaf sheaths, and young panicles.

Its subcellular location is the nucleus. Trans-acting factor that binds specifically to the consensus nucleotide sequence 5'-TNCGTACAA-3'. May be involved in panicle development. This Oryza sativa subsp. japonica (Rice) protein is Squamosa promoter-binding-like protein 2 (SPL2).